Reading from the N-terminus, the 162-residue chain is Caveolin-2 (162 aa).

The Cytoplasmic segment spans residues Met-1–Lys-86. Residue Tyr-19 is modified to Phosphotyrosine; by SRC. Ser-20 and Ser-23 each carry phosphoserine. Position 27 is a phosphotyrosine; by SRC (Tyr-27). Ser-36 is subject to Phosphoserine. Positions Phe-87–Leu-107 form an intramembrane region, helical. Residues Ser-108–Asp-162 are Cytoplasmic-facing.

Belongs to the caveolin family. Monomer or homodimer. Interacts with CAV1; the interaction forms a stable heterooligomeric complex that is required for targeting to lipid rafts and for caveolae formation. Tyrosine phosphorylated forms do not form heterooligomers with the Tyr-19-phosphorylated form existing as a monomer or dimer, and the Tyr-27-form as a monomer only. Interacts (tyrosine phosphorylated form) with the SH2 domain-containing proteins, RASA1, NCK1 and SRC. Interacts (tyrosine phosphorylated form) with INSR, the interaction (Tyr-27-phosphorylated form) is increased on insulin stimulation. Interacts (Tyr-19 phosphorylated form) with MAPK1 (phosphorylated form); the interaction, promoted by insulin, leads to nuclear location and MAPK1 activation. Interacts with STAT3; the interaction is increased on insulin-induced tyrosine phosphorylation leading to STAT activation. Post-translationally, phosphorylated on serine and tyrosine residues. CAV1 promotes phosphorylation on Ser-23 which then targets the complex to the plasma membrane, lipid rafts and caveolae. Phosphorylation on Ser-36 appears to modulate mitosis in endothelial cells. Phosphorylation on both Tyr-19 and Tyr-27 is required for insulin-induced 'Ser-727' phosphorylation of STAT3 and its activation. Phosphorylation on Tyr-19 is required for insulin-induced phosphorylation of MAPK1 and DNA binding of STAT3. Tyrosine phosphorylation is induced by both EGF and insulin (By. similarity).

The protein localises to the nucleus. It localises to the cytoplasm. The protein resides in the golgi apparatus membrane. It is found in the cell membrane. Its subcellular location is the membrane. The protein localises to the caveola. May act as a scaffolding protein within caveolar membranes. Interacts directly with G-protein alpha subunits and can functionally regulate their activity. Acts as an accessory protein in conjunction with CAV1 in targeting to lipid rafts and driving caveolae formation. The Ser-36 phosphorylated form has a role in modulating mitosis in endothelial cells. Positive regulator of cellular mitogenesis of the MAPK signaling pathway. Required for the insulin-stimulated nuclear translocation and activation of MAPK1 and STAT3, and the subsequent regulation of cell cycle progression. The protein is Caveolin-2 (CAV2) of Loxodonta africana (African elephant).